The primary structure comprises 222 residues: MRIAIDGPAGAGKSTVARILAKKLSFTYLDTGAMYRAVTVLFLENNLSLEDENGIKRLLEKTDIKIIPGDEGQKILLNERDVTELIRTPQVSELVAKVSALPEVRKYLTELQRKIIAKGNVVADGRDIGTVVMPEAEVKIFLTASAEERARRRHRELLAKGYEVSYEEVFREVLKRDELDTTREISPLRKAEDAILVDTTGLKIEEVVAKLLEIIGRKNDVL.

7-15 is a binding site for ATP; sequence GPAGAGKST.

This sequence belongs to the cytidylate kinase family. Type 1 subfamily.

The protein localises to the cytoplasm. The enzyme catalyses CMP + ATP = CDP + ADP. It catalyses the reaction dCMP + ATP = dCDP + ADP. The chain is Cytidylate kinase from Carboxydothermus hydrogenoformans (strain ATCC BAA-161 / DSM 6008 / Z-2901).